Reading from the N-terminus, the 912-residue chain is Metabotropic glutamate receptor 4 (912 aa).

The signal sequence occupies residues 1–32; that stretch reads MSGKGGWAWWWARLPLCLLLSLYAPWVPSSLG. Topologically, residues 33–587 are extracellular; sequence KPKGHPHMNS…IVKLEWDSPW (555 aa). The cysteines at positions 67 and 109 are disulfide-linked. The N-linked (GlcNAc...) asparagine glycan is linked to Asn-98. Residues Ser-159, 180–182, and Tyr-230 contribute to the L-glutamate site; that span reads AST. Cystine bridges form between Cys-249/Cys-538, Cys-372/Cys-388, Cys-428/Cys-435, Cys-520/Cys-539, Cys-524/Cys-542, Cys-545/Cys-557, and Cys-560/Cys-573. An N-linked (GlcNAc...) asparagine glycan is attached at Asn-301. Residue Asp-312 participates in L-glutamate binding. Lys-405 is an L-glutamate binding site. N-linked (GlcNAc...) asparagine glycans are attached at residues Asn-454 and Asn-484. Residue Asn-569 is glycosylated (N-linked (GlcNAc...) asparagine). A helical transmembrane segment spans residues 588–610; it reads AVLPLFLAVVGIAATLFVVVTFV. At 611 to 624 the chain is on the cytoplasmic side; that stretch reads RYNDTPIVKASGRE. Residues 625–645 form a helical membrane-spanning segment; that stretch reads LSYVLLAGIFLCYATTFLMIA. The Extracellular portion of the chain corresponds to 646–656; sequence EPDLGTCSLRR. Residues 657–675 traverse the membrane as a helical segment; sequence IFLGLGMSISYAALLTKTN. Residues 676 to 699 lie on the Cytoplasmic side of the membrane; that stretch reads RIYRIFEQGKRSVSAPRFISPASQ. A helical membrane pass occupies residues 700-720; sequence LAITFILISLQLLGICVWFVV. At 721 to 750 the chain is on the extracellular side; it reads DPSHSVVDFQDQRTLDPRFARGVLKCDISD. Residues 751 to 772 traverse the membrane as a helical segment; sequence LSLICLLGYSMLLMVTCTVYAI. Residues 773-785 lie on the Cytoplasmic side of the membrane; that stretch reads KTRGVPETFNEAK. The helical transmembrane segment at 786 to 808 threads the bilayer; it reads PIGFTMYTTCIVWLAFIPIFFGT. The Extracellular segment spans residues 809-821; the sequence is SQSADKLYIQTTT. The chain crosses the membrane as a helical span at residues 822-847; sequence LTVSVSLSASVSLGMLYMPKVYIILF. The Cytoplasmic segment spans residues 848–912; that stretch reads HPEQNVPKRK…TYVTYTNHAI (65 aa).

Belongs to the G-protein coupled receptor 3 family. Interacts with PICK1. Is widely distributed in the CNS. Predominant expression is seen in the granule cells of the cerebellum.

It localises to the cell membrane. Its function is as follows. G-protein coupled receptor for glutamate. Ligand binding causes a conformation change that triggers signaling via guanine nucleotide-binding proteins (G proteins) and modulates the activity of down-stream effectors. Signaling inhibits adenylate cyclase activity. The chain is Metabotropic glutamate receptor 4 (Grm4) from Rattus norvegicus (Rat).